A 187-amino-acid polypeptide reads, in one-letter code: DNA-3-methyladenine glycosylase 1 (187 aa).

Positions 4, 17, 175, and 179 each coordinate Zn(2+).

The enzyme catalyses Hydrolysis of alkylated DNA, releasing 3-methyladenine.. Activity is controlled by product inhibition. Its function is as follows. Hydrolysis of the deoxyribose N-glycosidic bond to excise 3-methyladenine from the damaged DNA polymer formed by alkylation lesions. This Escherichia coli (strain K12) protein is DNA-3-methyladenine glycosylase 1.